The following is a 405-amino-acid chain: Lipase lipl-1 (405 aa).

A signal peptide spans 1-20; that stretch reads MRSWSTVMLAVLATAATVFG. A glycan (N-linked (GlcNAc...) asparagine) is linked at N66. S169 functions as the Nucleophile in the catalytic mechanism. N-linked (GlcNAc...) asparagine glycosylation is present at N273. Active-site charge relay system residues include D344 and H376.

The protein belongs to the AB hydrolase superfamily. Lipase family.

It is found in the secreted. Its subcellular location is the lysosome lumen. Functionally, lipase that, together with lipl-3, plays a role in the response to nutrient deprivation by controlling lipid metabolism. Specifically, involved in the breakdown of lipids during lipophagy, a process during which lipids contained in lipid droplets that have been delivered to lysosomes by autophagy are degraded. The polypeptide is Lipase lipl-1 (Caenorhabditis elegans).